Reading from the N-terminus, the 188-residue chain is Peroxynitrite isomerase (188 aa).

Residues 35 to 41 (GTWRGEG) carry the GXWXGXG motif. His178 contacts heme b.

This sequence belongs to the nitrobindin family. In terms of assembly, homodimer. The cofactor is heme b.

It catalyses the reaction peroxynitrite = nitrate. It participates in nitrogen metabolism. Functionally, heme-binding protein able to scavenge peroxynitrite and to protect free L-tyrosine against peroxynitrite-mediated nitration, by acting as a peroxynitrite isomerase that converts peroxynitrite to nitrate. Therefore, this protein likely plays a role in peroxynitrite sensing and in the detoxification of reactive nitrogen and oxygen species (RNS and ROS, respectively). Is able to bind nitric oxide (NO) in vitro, but may act as a sensor of peroxynitrite levels in vivo. The sequence is that of Peroxynitrite isomerase from Frankia casuarinae (strain DSM 45818 / CECT 9043 / HFP020203 / CcI3).